The following is a 496-amino-acid chain: Palmitoleoyl-protein carboxylesterase NOTUM (496 aa).

The N-terminal stretch at 1–19 is a signal peptide; that stretch reads MGRGVRVLLLLSLLHCAGG. The tract at residues 21-46 is disordered; that stretch reads EGRKTWRRRGQQPPPPPRTEAAPAAG. Ser-81 bears the Phosphoserine; by FAM20C mark. Asn-96 carries an N-linked (GlcNAc...) asparagine glycan. Active-site charge relay system residues include Ser-232, Asp-340, and His-389.

The protein belongs to the pectinacetylesterase family. Notum subfamily. Rarely expressed in adult normal tissues.

It is found in the secreted. The catalysed reaction is [Wnt protein]-O-(9Z)-hexadecenoyl-L-serine + H2O = [Wnt protein]-L-serine + (9Z)-hexadecenoate + H(+). Its function is as follows. Carboxylesterase that acts as a key negative regulator of the Wnt signaling pathway by specifically mediating depalmitoleoylation of WNT proteins. Serine palmitoleoylation of WNT proteins is required for efficient binding to frizzled receptors. The polypeptide is Palmitoleoyl-protein carboxylesterase NOTUM (Homo sapiens (Human)).